Consider the following 765-residue polypeptide: Kinesin-like protein KIN-14S (765 aa).

The 325-residue stretch at 132-456 (NIRVFCRCRP…LNFASRVRGI (325 aa)) folds into the Kinesin motor domain. 215-222 (GQTGTGKT) is a binding site for ATP. The stretch at 469-534 (ELLKSKQMAE…ERKTRIKQES (66 aa)) forms a coiled coil. 2 disordered regions span residues 581 to 613 (MPQQQPSQGHSKRFSDTTFKENNNSNRRSSSMD) and 654 to 678 (LRPEPSSLSSMETPSRPPPSFRGDP). The segment covering 602-611 (NNNSNRRSSS) has biased composition (low complexity).

Belongs to the TRAFAC class myosin-kinesin ATPase superfamily. Kinesin family. KIN-14 subfamily.

The sequence is that of Kinesin-like protein KIN-14S from Arabidopsis thaliana (Mouse-ear cress).